A 334-amino-acid polypeptide reads, in one-letter code: Ethanol acetyltransferase 1 (334 aa).

Residues 1-16 (MFASNVVVLNKRSIRF) constitute a mitochondrion transit peptide. Catalysis depends on charge relay system residues Ser-124, Asp-148, and His-296.

It belongs to the AB hydrolase superfamily.

Its subcellular location is the mitochondrion. It catalyses the reaction ethanol + acetyl-CoA = ethyl acetate + CoA. The catalysed reaction is acetyl-CoA + H2O = acetate + CoA + H(+). The enzyme catalyses ethyl acetate + H2O = ethanol + acetate + H(+). Functionally, alcohol acetyltransferase that catalyzes the synthesis of ethyl acetate from ethanol and acetyl-CoA. Can also function as a thioesterase by hydrolyzing acetyl-CoA in the absence of ethanol, as well as esterase hydrolyzing ethyl acetate. The polypeptide is Ethanol acetyltransferase 1 (EAT1) (Hanseniaspora uvarum (Yeast)).